The following is an 896-amino-acid chain: NET1-associated nuclear protein 1 (896 aa).

WD repeat units lie at residues 295 to 334 (WHIDSVLSLSFSHDGSYLLSGGWEKVMSLWQLETNSQQFL), 490 to 542 (LQDP…TNWN), 552 to 595 (GISV…SNWC), and 605 to 645 (NHFS…ESLE).

Interacts with snoRNA U3. Interacts with MPP10. Component of the ribosomal small subunit (SSU) processome composed of at least 40 protein subunits and snoRNA U3. In the absence of snoRNA3, forms a complex with other t-UTPs. This complex can associate with pre-18S ribosomal RNAs.

The protein resides in the nucleus. It localises to the nucleolus. Functionally, involved in nucleolar processing of pre-18S ribosomal RNA. Required for optimal pre-ribosomal RNA transcription by RNA polymerase I together with a subset of U3 proteins required for transcription (t-UTPs). The protein is NET1-associated nuclear protein 1 (NAN1) of Saccharomyces cerevisiae (strain ATCC 204508 / S288c) (Baker's yeast).